The chain runs to 354 residues: Isopentenyl-diphosphate delta-isomerase (354 aa).

6–7 (RK) lines the substrate pocket. FMN contacts are provided by residues 63–65 (AMT), S93, and N122. A substrate-binding site is contributed by 93–95 (SQR). Q160 is a binding site for substrate. E161 lines the Mg(2+) pocket. FMN-binding positions include K192, T221, 273-275 (GIR), and 294-295 (SQ).

This sequence belongs to the IPP isomerase type 2 family. Homooctamer. Dimer of tetramers. Requires FMN as cofactor. It depends on NADPH as a cofactor. Mg(2+) is required as a cofactor.

It localises to the cytoplasm. The enzyme catalyses isopentenyl diphosphate = dimethylallyl diphosphate. In terms of biological role, involved in the biosynthesis of isoprenoids. Catalyzes the 1,3-allylic rearrangement of the homoallylic substrate isopentenyl (IPP) to its allylic isomer, dimethylallyl diphosphate (DMAPP). The protein is Isopentenyl-diphosphate delta-isomerase of Pyrobaculum islandicum (strain DSM 4184 / JCM 9189 / GEO3).